The chain runs to 376 residues: Succinyl-diaminopimelate desuccinylase (376 aa).

Zn(2+) is bound at residue His66. Asp68 is an active-site residue. Residue Asp99 coordinates Zn(2+). Glu133 (proton acceptor) is an active-site residue. Positions 134, 162, and 348 each coordinate Zn(2+).

It belongs to the peptidase M20A family. DapE subfamily. Homodimer. It depends on Zn(2+) as a cofactor. Co(2+) is required as a cofactor.

The catalysed reaction is N-succinyl-(2S,6S)-2,6-diaminopimelate + H2O = (2S,6S)-2,6-diaminopimelate + succinate. The protein operates within amino-acid biosynthesis; L-lysine biosynthesis via DAP pathway; LL-2,6-diaminopimelate from (S)-tetrahydrodipicolinate (succinylase route): step 3/3. Catalyzes the hydrolysis of N-succinyl-L,L-diaminopimelic acid (SDAP), forming succinate and LL-2,6-diaminopimelate (DAP), an intermediate involved in the bacterial biosynthesis of lysine and meso-diaminopimelic acid, an essential component of bacterial cell walls. The sequence is that of Succinyl-diaminopimelate desuccinylase from Thioalkalivibrio sulfidiphilus (strain HL-EbGR7).